The primary structure comprises 130 residues: Holo-[acyl-carrier-protein] synthase (130 aa).

The Mg(2+) site is built by D9 and E58.

This sequence belongs to the P-Pant transferase superfamily. AcpS family. Mg(2+) is required as a cofactor.

The protein localises to the cytoplasm. It catalyses the reaction apo-[ACP] + CoA = holo-[ACP] + adenosine 3',5'-bisphosphate + H(+). Transfers the 4'-phosphopantetheine moiety from coenzyme A to a Ser of acyl-carrier-protein. The sequence is that of Holo-[acyl-carrier-protein] synthase from Mycobacterium sp. (strain JLS).